The primary structure comprises 225 residues: Histone-arginine methyltransferase METTL23 (225 aa).

Belongs to the methyltransferase superfamily. METTL23 family. As to quaternary structure, interacts with HSPA5, HSP90B1, TUBULIN, UGGT1 and UGGT2. Interacts with TET3. Interacts with STPG4.

Its subcellular location is the nucleus. It is found in the cytoplasm. The catalysed reaction is L-arginyl-[protein] + 2 S-adenosyl-L-methionine = N(omega),N(omega)-dimethyl-L-arginyl-[protein] + 2 S-adenosyl-L-homocysteine + 2 H(+). Histone methyltransferase that dimethylates histone H3 at 'Arg-17', forming asymmetric dimethylarginine (H3R17me2a), leading to activate transcription via chromatin remodeling. Maternal factor involved in epigenetic chromatin reprogramming of the paternal genome in the zygote: mediates H3R17me2a, promoting histone H3.3 incorporation in the male pronucleus, leading to TET3 recruitment and subsequent DNA demethylation. In Rattus norvegicus (Rat), this protein is Histone-arginine methyltransferase METTL23.